The sequence spans 286 residues: Co-chaperone protein DjlA (286 aa).

Residues 1-6 lie on the Periplasmic side of the membrane; the sequence is MQFIGK. A helical transmembrane segment spans residues 7-31; sequence IIGFFIGYKLFGGLFGGLLGIFIGH. At 32 to 286 the chain is on the cytoplasmic side; sequence LADKKLYELG…DLICKTKGWK (255 aa). Residues 220 to 286 form the J domain; that stretch reads DAYTVLGINE…DLICKTKGWK (67 aa).

As to quaternary structure, homodimer.

The protein resides in the cell inner membrane. Functionally, regulatory DnaK co-chaperone. Direct interaction between DnaK and DjlA is needed for the induction of the wcaABCDE operon, involved in the synthesis of a colanic acid polysaccharide capsule, possibly through activation of the RcsB/RcsC phosphotransfer signaling pathway. The colanic acid capsule may help the bacterium survive conditions outside the host. The chain is Co-chaperone protein DjlA from Haemophilus ducreyi (strain 35000HP / ATCC 700724).